The chain runs to 601 residues: DNA ligase 2 (601 aa).

Residue E263 participates in ATP binding. K265 (N6-AMP-lysine intermediate) is an active-site residue. Positions 270, 285, 314, 354, 432, and 438 each coordinate ATP.

It belongs to the ATP-dependent DNA ligase family. Mg(2+) is required as a cofactor.

It carries out the reaction ATP + (deoxyribonucleotide)n-3'-hydroxyl + 5'-phospho-(deoxyribonucleotide)m = (deoxyribonucleotide)n+m + AMP + diphosphate.. In terms of biological role, DNA ligase that seals nicks in double-stranded DNA during DNA replication, DNA recombination and DNA repair. The polypeptide is DNA ligase 2 (Thermofilum pendens (strain DSM 2475 / Hrk 5)).